A 424-amino-acid chain; its full sequence is Serine--tRNA ligase (424 aa).

231–233 (TAE) contacts L-serine. Residue 262–264 (RAE) coordinates ATP. Residue glutamate 285 coordinates L-serine. 349–352 (EISS) contributes to the ATP binding site. Residue serine 385 coordinates L-serine.

This sequence belongs to the class-II aminoacyl-tRNA synthetase family. Type-1 seryl-tRNA synthetase subfamily. Homodimer. The tRNA molecule binds across the dimer.

It is found in the cytoplasm. The catalysed reaction is tRNA(Ser) + L-serine + ATP = L-seryl-tRNA(Ser) + AMP + diphosphate + H(+). It carries out the reaction tRNA(Sec) + L-serine + ATP = L-seryl-tRNA(Sec) + AMP + diphosphate + H(+). It participates in aminoacyl-tRNA biosynthesis; selenocysteinyl-tRNA(Sec) biosynthesis; L-seryl-tRNA(Sec) from L-serine and tRNA(Sec): step 1/1. In terms of biological role, catalyzes the attachment of serine to tRNA(Ser). Is also able to aminoacylate tRNA(Sec) with serine, to form the misacylated tRNA L-seryl-tRNA(Sec), which will be further converted into selenocysteinyl-tRNA(Sec). This is Serine--tRNA ligase from Geobacillus sp. (strain WCH70).